The chain runs to 324 residues: Olfactory receptor 6K2 (324 aa).

The Extracellular segment spans residues 1 to 25 (MESPNRTTIQEFIFSAFPYSWVKSV). A glycan (N-linked (GlcNAc...) asparagine) is linked at Asn5. Residues 26–46 (VCFVPLLFIYAFIVVGNLVII) form a helical membrane-spanning segment. Residues 47-54 (TVVQLNTH) lie on the Cytoplasmic side of the membrane. Residues 55–75 (LHTPMYTFISALSFLEIWYTT) traverse the membrane as a helical segment. The Extracellular segment spans residues 76 to 98 (ATIPKMLSSLLSERSISFNGCLL). A disulfide bridge links Cys96 with Cys188. The helical transmembrane segment at 99–119 (QMYFFHSTGICEVCLLTVMAF) threads the bilayer. Topologically, residues 120–138 (DHYLAICSPLHYPSIMTPK) are cytoplasmic. The chain crosses the membrane as a helical span at residues 139-159 (LCTQLTLSCCVCGFITPLPEI). Residues 160–198 (AWISTLPFCGSNHLEHIFCDFLPVLRLACTDTRAIVMIQ) lie on the Extracellular side of the membrane. The helical transmembrane segment at 199–218 (VVDVIHAVEIITAVMLIFMS) threads the bilayer. Residues 219–238 (YDGIVAVILRIHSAGGRRTA) lie on the Cytoplasmic side of the membrane. The helical transmembrane segment at 239–259 (FSTCVSHFIVFSLFFGSVTLM) threads the bilayer. Over 260–272 (YLRFSATYSLFWD) the chain is Extracellular. The helical transmembrane segment at 273–293 (IAIALAFAVLSPFFNPIIYSL) threads the bilayer. Topologically, residues 294 to 324 (RNKEIKEAIKKHIGQAKIFFSVRPGTSSKIF) are cytoplasmic.

The protein belongs to the G-protein coupled receptor 1 family.

The protein localises to the cell membrane. In terms of biological role, odorant receptor. The polypeptide is Olfactory receptor 6K2 (OR6K2) (Homo sapiens (Human)).